The chain runs to 315 residues: Olfactory receptor 2V1 (315 aa).

The next 7 helical transmembrane spans lie at 31–51, 59–79, 100–120, 145–165, 196–216, 239–259, and 273–293; these read TVMLVFTVALCGNVLLILLIY, PMYFFLSQLSLMDLMLVCNIV, IQIGFFVSLVGSEGLLLGLMA, IAGSSWAFGILDGIIQMVAAM, FDTLLFACCVFMLLLPFSIIV, LATCSSHLTAVSLFYGAAMFI, and KVVSIFYTVLTPMLNPLIYSL. A disulfide bridge connects residues C98 and C180.

The protein belongs to the G-protein coupled receptor 1 family.

It is found in the cell membrane. Its function is as follows. Odorant receptor. Activated by (+) and (-)-limonene. The sequence is that of Olfactory receptor 2V1 from Mus musculus (Mouse).